Here is a 111-residue protein sequence, read N- to C-terminus: PCNA-associated factor (111 aa).

A compositionally biased stretch (polar residues) spans 1-10; that stretch reads MVRTKANSVP. The tract at residues 1–111 is disordered; the sequence is MVRTKANSVP…PPDHTDDEKE (111 aa). Residue Ser-8 is modified to Phosphoserine. Lys-15 participates in a covalent cross-link: Glycyl lysine isopeptide (Lys-Gly) (interchain with G-Cter in ubiquitin). A D-box motif is present at residues 23 to 34; that stretch reads RKVLGSSTSAAN. Lys-24 is subject to N6-acetyllysine; alternate. Lys-24 participates in a covalent cross-link: Glycyl lysine isopeptide (Lys-Gly) (interchain with G-Cter in ubiquitin); alternate. Over residues 27 to 39 the composition is skewed to polar residues; sequence GSSTSAANSTPLS. Ser-28, Ser-31, and Ser-72 each carry phosphoserine. The short motif at 62–72 is the PIP-box element; the sequence is QKGIGEFFSLS. Residues 74–84 show a composition bias toward basic and acidic residues; sequence KDSEKENRIPE. Positions 78–80 match the KEN box motif; sequence KEN. Positions 85 to 97 match the Initiation motif motif; sequence EAGSSGLGKAKRK.

As to quaternary structure, interacts (when monoubiquitinated at Lys-15 and Lys-24) with PCNA. Interacts with isoform 2/p33ING1b of ING1. Interacts with BRCA1. Monoubiquitinated at Lys-15 and Lys-24 during normal S phase, promoting its association with PCNA. Also diubiquitinated at these 2 sites. Following DNA damage, monoubiquitin chains at Lys-15 and Lys-24 are probably extended, leading to disrupt the interaction with PCNA. Polyubiquitinated by the APC/C complex at the mitotic exit, leading to its degradation by the proteasome.

The protein localises to the nucleus. It is found in the cytoplasm. Its subcellular location is the perinuclear region. Its function is as follows. PCNA-binding protein that acts as a regulator of DNA repair during DNA replication. Following DNA damage, the interaction with PCNA is disrupted, facilitating the interaction between monoubiquitinated PCNA and the translesion DNA synthesis DNA polymerase eta (POLH) at stalled replisomes, facilitating the bypass of replication-fork-blocking lesions. Also acts as a regulator of centrosome number. The sequence is that of PCNA-associated factor from Bos taurus (Bovine).